The following is a 1056-amino-acid chain: 120.7 kDa protein in NOF-FB transposable element (1056 aa).

The disordered stretch occupies residues 716 to 749 (KTIKPTEGNDAEDNDTDDENKEMDLSEQPKEKPR). A compositionally biased stretch (acidic residues) spans 724 to 736 (NDAEDNDTDDENK). The segment covering 737 to 749 (EMDLSEQPKEKPR) has biased composition (basic and acidic residues).

The protein localises to the nucleus. In terms of biological role, may be involved in the transposition of NOF-FB and other FB elements. The sequence is that of 120.7 kDa protein in NOF-FB transposable element (NOF) from Drosophila melanogaster (Fruit fly).